The following is a 437-amino-acid chain: Type II methyltransferase M.HgiBI (437 aa).

An SAM-dependent MTase C5-type domain is found at 4 to 431 (FRFIDLFAGI…KALQCVKLFE (428 aa)). Cysteine 75 is an active-site residue.

This sequence belongs to the class I-like SAM-binding methyltransferase superfamily. C5-methyltransferase family.

The enzyme catalyses a 2'-deoxycytidine in DNA + S-adenosyl-L-methionine = a 5-methyl-2'-deoxycytidine in DNA + S-adenosyl-L-homocysteine + H(+). A methylase that recognizes the double-stranded sequence 5'-GGWCC-3', methylates C-? on both strands, and protects the DNA from cleavage by the HgiBI endonuclease. This system is less active than isoschizomeric RM.HgiEI. The protein is Type II methyltransferase M.HgiBI of Herpetosiphon aurantiacus (Herpetosiphon giganteus).